Consider the following 631-residue polypeptide: Glycosyltransferase-like protein LARGE (631 aa).

The Cytoplasmic segment spans residues 1–6 (MQSNYS). The helical; Signal-anchor for type II membrane protein transmembrane segment at 7-27 (ISYFLLILFTGTSSYFTIWNF) threads the bilayer. Over 28–631 (VDHTRVGAFP…TASRLGIKLR (604 aa)) the chain is Lumenal. Residues asparagine 95, asparagine 105, asparagine 167, asparagine 177, asparagine 287, asparagine 400, asparagine 485, asparagine 502, asparagine 521, asparagine 529, and asparagine 593 are each glycosylated (N-linked (GlcNAc...) asparagine).

It belongs to the glycosyltransferase 8 family.

The protein resides in the golgi apparatus membrane. Probable glycosyltransferase. The chain is Glycosyltransferase-like protein LARGE (lge-1) from Caenorhabditis elegans.